Here is a 1606-residue protein sequence, read N- to C-terminus: Phosphatidylinositol 3,4,5-trisphosphate-dependent Rac exchanger 2 protein (1606 aa).

Positions 23-214 (LRVCVLSELQ…KAVCSNINEA (192 aa)) constitute a DH domain. The region spanning 245–361 (EMLMCGVLLK…WFEAILKERE (117 aa)) is the PH domain. DEP domains follow at residues 390–464 (CRQG…RFRY) and 491–566 (SLFT…FFSD). 2 PDZ domains span residues 592-671 (KSLL…VLVS) and 677-754 (TVKI…QDSI). The tract at residues 1581-1606 (GVRDRTPQSAPRLYKLCEPPPPAGEE) is disordered.

As to quaternary structure, interacts with RAC1. As to expression, isoform 1 is highly expressed in skeletal muscle, heart and placenta, absent from peripheral blood leukocytes. Isoform 2 is expressed in skeletal muscle, kidney, small intestine, and placenta. Isoform 3 is expressed in the heart.

Its function is as follows. Functions as a RAC1 guanine nucleotide exchange factor (GEF), activating Rac proteins by exchanging bound GDP for free GTP. Its activity is synergistically activated by phosphatidylinositol 3,4,5-trisphosphate and the beta gamma subunits of heterotrimeric G protein. Mediates the activation of RAC1 in a PI3K-dependent manner. May be an important mediator of Rac signaling, acting directly downstream of both G protein-coupled receptors and phosphoinositide 3-kinase. The sequence is that of Phosphatidylinositol 3,4,5-trisphosphate-dependent Rac exchanger 2 protein from Homo sapiens (Human).